We begin with the raw amino-acid sequence, 627 residues long: Sphingomyelin phosphodiesterase (627 aa).

The signal sequence occupies residues Met-1–Ala-44. A Saposin B-type domain is found at Gln-83–Asp-167. N-linked (GlcNAc...) asparagine glycosylation occurs at Asn-84. Cystine bridges form between Cys-87-Cys-163, Cys-90-Cys-155, and Cys-118-Cys-129. An N-linked (GlcNAc...) asparagine glycan is attached at Asn-173. Zn(2+) contacts are provided by Asp-204 and His-206. 2 disulfide bridges follow: Cys-219/Cys-224 and Cys-225/Cys-248. 2 residues coordinate Zn(2+): Asp-276 and Asn-316. 2 N-linked (GlcNAc...) asparagine glycosylation sites follow: Asn-333 and Asn-393. Residues Cys-383 and Cys-429 are joined by a disulfide bond. Zn(2+) is bound by residues His-423, His-455, and His-457. At Ser-506 the chain carries Phosphoserine. N-linked (GlcNAc...) asparagine glycosylation occurs at Asn-518. 2 disulfides stabilise this stretch: Cys-582/Cys-586 and Cys-592/Cys-605. The N-linked (GlcNAc...) asparagine glycan is linked to Asn-611.

The protein belongs to the acid sphingomyelinase family. In terms of assembly, monomer. Interacts with SORT1; the interaction is required for SMPD1 targeting to lysosomes. Zn(2+) serves as cofactor. Proteolytically processed. Mature lysosomal form arises from C-terminal proteolytic processing of pro-sphingomyelin phosphodiesterase. In terms of processing, both lysosomal and secreted forms are glycosylated but they show a differential pattern of glycosylation. Post-translationally, phosphorylated at Ser-506 by PRKCD upon stress stimuli. Phosphorylation is required for secretion. This form is generated following cleavage by CASP7 in the extracellular milieu. It shows increased activity.

The protein localises to the lysosome. Its subcellular location is the lipid droplet. It localises to the secreted. The protein resides in the extracellular space. The enzyme catalyses a sphingomyelin + H2O = phosphocholine + an N-acylsphing-4-enine + H(+). It carries out the reaction N-(octadecanoyl)-sphing-4-enine-1-phosphocholine + H2O = N-octadecanoylsphing-4-enine + phosphocholine + H(+). It catalyses the reaction a 1,2-diacyl-sn-glycero-3-phosphocholine + H2O = phosphocholine + a 1,2-diacyl-sn-glycerol + H(+). The catalysed reaction is 1,2-dihexadecanoyl-sn-glycero-3-phosphocholine + H2O = 1,2-dihexadecanoyl-sn-glycerol + phosphocholine + H(+). Hydrolysis of liposomal sphingomyelin is stimulated by incorporation of diacylglycerol (DAG), ceramide and free fatty acids into the liposomal membranes. Phosphatidylcholine hydrolysis is inhibited by incorporation of cholesterol, ceramide, DAG, monoacylglycerol and fatty acids. Converts sphingomyelin to ceramide. Exists as two enzymatic forms that arise from alternative trafficking of a single protein precursor, one that is targeted to the endolysosomal compartment, whereas the other is released extracellularly. However, in response to various forms of stress, lysosomal exocytosis may represent a major source of the secretory form. Its function is as follows. In the lysosomes, converts sphingomyelin to ceramide. Plays an important role in the export of cholesterol from the intraendolysosomal membranes. Also has phospholipase C activities toward 1,2-diacylglycerolphosphocholine and 1,2-diacylglycerolphosphoglycerol. Modulates stress-induced apoptosis through the production of ceramide. Functionally, when secreted, modulates cell signaling with its ability to reorganize the plasma membrane by converting sphingomyelin to ceramide. Secreted form is increased in response to stress and inflammatory mediators such as IL1B, IFNG or TNF as well as upon infection with bacteria and viruses. Produces the release of ceramide in the outer leaflet of the plasma membrane playing a central role in host defense. Ceramide reorganizes these rafts into larger signaling platforms that are required to internalize P.aeruginosa, induce apoptosis and regulate the cytokine response in infected cells. In wounded cells, the lysosomal form is released extracellularly in the presence of Ca(2+) and promotes endocytosis and plasma membrane repair. In terms of biological role, this form is generated following cleavage by CASP7 in the extracellular milieu in response to bacterial infection. It shows increased ability to convert sphingomyelin to ceramide and promotes plasma membrane repair. Plasma membrane repair by ceramide counteracts the action of gasdermin-D (GSDMD) perforin (PRF1) pores that are formed in response to bacterial infection. (Microbial infection) Secretion is activated by bacteria such as P.aeruginosa, this activation results in the release of ceramide in the outer leaflet of the plasma membrane which facilitates the infection. This is Sphingomyelin phosphodiesterase from Mus musculus (Mouse).